The sequence spans 335 residues: MQNILNKIYQSQHLNKEESYRLFKSISSGSITDITLSSILTAMKIRGESKEEIIGAILAFSECVKYFPKPNYVFLDIVGTGGDIKNTINISTASAFVAASCGLKIVKHCNQGVSSTSGSADLLKRFHINLHASSKEHRKTLDKLNICFLFAPKYHDSFKYSNNVRKILKTRTIFNLLGPFLNPAIPPLALIGVYKKDLLYSSIEILKSLKYQRAIVLHGDGTDEVTLHNTTHVAELFNGKIFSYELHPKDFGLKIHDKKIFTKTSLEENYYIINQIMKGKGDKLNEELIAANVAILFKIFGYEDLKSNTKLALNKIRSGDVYKHIINVANMLKED.

5-phospho-alpha-D-ribose 1-diphosphate is bound by residues Gly-79, 82-83 (GD), Thr-87, 89-92 (NIST), 107-115 (KHCNQGVSS), and Ser-119. Position 79 (Gly-79) interacts with anthranilate. Ser-91 is a Mg(2+) binding site. Asn-110 contacts anthranilate. Residue Arg-165 participates in anthranilate binding. Mg(2+) contacts are provided by Asp-223 and Glu-224.

The protein belongs to the anthranilate phosphoribosyltransferase family. Homodimer. Requires Mg(2+) as cofactor.

It carries out the reaction N-(5-phospho-beta-D-ribosyl)anthranilate + diphosphate = 5-phospho-alpha-D-ribose 1-diphosphate + anthranilate. Its pathway is amino-acid biosynthesis; L-tryptophan biosynthesis; L-tryptophan from chorismate: step 2/5. Catalyzes the transfer of the phosphoribosyl group of 5-phosphorylribose-1-pyrophosphate (PRPP) to anthranilate to yield N-(5'-phosphoribosyl)-anthranilate (PRA). The protein is Anthranilate phosphoribosyltransferase of Buchnera aphidicola subsp. Diuraphis noxia.